Consider the following 301-residue polypeptide: Phosphatidylglycerol--prolipoprotein diacylglyceryl transferase (301 aa).

3 helical membrane-spanning segments follow: residues 17–37 (LAVR…IVVG), 59–79 (MLFY…VLFY), and 97–117 (GGMS…LFAY). Position 142 (Arg142) interacts with a 1,2-diacyl-sn-glycero-3-phospho-(1'-sn-glycerol). 2 helical membrane-spanning segments follow: residues 230-250 (MGAI…TVEF) and 265-285 (LSMG…LLVW).

This sequence belongs to the Lgt family.

The protein localises to the cell inner membrane. It catalyses the reaction L-cysteinyl-[prolipoprotein] + a 1,2-diacyl-sn-glycero-3-phospho-(1'-sn-glycerol) = an S-1,2-diacyl-sn-glyceryl-L-cysteinyl-[prolipoprotein] + sn-glycerol 1-phosphate + H(+). The protein operates within protein modification; lipoprotein biosynthesis (diacylglyceryl transfer). Its function is as follows. Catalyzes the transfer of the diacylglyceryl group from phosphatidylglycerol to the sulfhydryl group of the N-terminal cysteine of a prolipoprotein, the first step in the formation of mature lipoproteins. In Paraburkholderia xenovorans (strain LB400), this protein is Phosphatidylglycerol--prolipoprotein diacylglyceryl transferase.